We begin with the raw amino-acid sequence, 152 residues long: SsrA-binding protein (152 aa).

It belongs to the SmpB family.

The protein resides in the cytoplasm. Its function is as follows. Required for rescue of stalled ribosomes mediated by trans-translation. Binds to transfer-messenger RNA (tmRNA), required for stable association of tmRNA with ribosomes. tmRNA and SmpB together mimic tRNA shape, replacing the anticodon stem-loop with SmpB. tmRNA is encoded by the ssrA gene; the 2 termini fold to resemble tRNA(Ala) and it encodes a 'tag peptide', a short internal open reading frame. During trans-translation Ala-aminoacylated tmRNA acts like a tRNA, entering the A-site of stalled ribosomes, displacing the stalled mRNA. The ribosome then switches to translate the ORF on the tmRNA; the nascent peptide is terminated with the 'tag peptide' encoded by the tmRNA and targeted for degradation. The ribosome is freed to recommence translation, which seems to be the essential function of trans-translation. The protein is SsrA-binding protein of Sulfurihydrogenibium sp. (strain YO3AOP1).